Reading from the N-terminus, the 197-residue chain is Recombination protein RecR (197 aa).

The C4-type zinc finger occupies 56 to 71; sequence CVRCFSLTDAETCNFC. Positions 79–174 constitute a Toprim domain; sequence RVLCVVETFA…RVTRIAQGLP (96 aa).

Belongs to the RecR family.

May play a role in DNA repair. It seems to be involved in an RecBC-independent recombinational process of DNA repair. It may act with RecF and RecO. The chain is Recombination protein RecR from Myxococcus xanthus (strain DK1622).